Reading from the N-terminus, the 170-residue chain is MAFVMIREAKEGDCGNILRLIRELAEYEKLSDQVKISEEALRADGFGETPFYHCLVAEILSAPGEPQGPCVVGYGLYYFSYSTWKGRNIYLEDIYVKPEYRGQGIGSKIIKKVAEVALDKGCSQLRLAVLDWNKRAMDLYKALGAQDLTEAEGWHCFRFEGEAMRELAGK.

In terms of domain architecture, N-acetyltransferase spans 4–166 (VMIREAKEGD…FRFEGEAMRE (163 aa)). Residue 27 to 28 (YE) coordinates substrate. Lys29 is modified (N6-acetyllysine). Glu92 provides a ligand contact to substrate. Residues 94-96 (IYV), 102-107 (GQGIGS), 133-135 (NKR), and Tyr140 contribute to the acetyl-CoA site. Tyr140 acts as the Proton donor in catalysis. Residue Glu152 participates in substrate binding.

It belongs to the acetyltransferase family. As to quaternary structure, homodimer.

It localises to the cytoplasm. It carries out the reaction S-(2-aminoethyl)-L-cysteine + acetyl-CoA = S-(2-acetamidoethyl)-L-cysteine + CoA + H(+). The catalysed reaction is an alkane-alpha,omega-diamine + acetyl-CoA = an N-acetylalkane-alpha,omega-diamine + CoA + H(+). Catalyzes the N-acetylation of the amino acid thialysine (S-(2-aminoethyl)-L-cysteine), a L-lysine analog with the 4-methylene group substituted with a sulfur. May also catalyze acetylation of polyamines, such as norspermidine, spermidine or spermine. However, ability to acetylate polyamines is weak, suggesting that it does not act as a diamine acetyltransferase in vivo. This is Thialysine N-epsilon-acetyltransferase from Bos taurus (Bovine).